A 436-amino-acid chain; its full sequence is Enolase (436 aa).

Position 163 (Gln163) interacts with (2R)-2-phosphoglycerate. Glu205 (proton donor) is an active-site residue. The Mg(2+) site is built by Asp242, Glu285, and Asp312. Positions 337, 366, 367, and 388 each coordinate (2R)-2-phosphoglycerate. The active-site Proton acceptor is Lys337.

This sequence belongs to the enolase family. Mg(2+) serves as cofactor.

The protein localises to the cytoplasm. Its subcellular location is the secreted. The protein resides in the cell surface. The catalysed reaction is (2R)-2-phosphoglycerate = phosphoenolpyruvate + H2O. It participates in carbohydrate degradation; glycolysis; pyruvate from D-glyceraldehyde 3-phosphate: step 4/5. Its function is as follows. Catalyzes the reversible conversion of 2-phosphoglycerate (2-PG) into phosphoenolpyruvate (PEP). It is essential for the degradation of carbohydrates via glycolysis. The protein is Enolase of Solidesulfovibrio magneticus (strain ATCC 700980 / DSM 13731 / RS-1) (Desulfovibrio magneticus).